A 502-amino-acid polypeptide reads, in one-letter code: Probable cytosol aminopeptidase 2 (502 aa).

Residues lysine 269 and aspartate 274 each contribute to the Mn(2+) site. Lysine 281 is an active-site residue. Residues aspartate 292, aspartate 351, and glutamate 353 each coordinate Mn(2+). The active site involves arginine 355.

This sequence belongs to the peptidase M17 family. Requires Mn(2+) as cofactor.

It is found in the cytoplasm. The catalysed reaction is Release of an N-terminal amino acid, Xaa-|-Yaa-, in which Xaa is preferably Leu, but may be other amino acids including Pro although not Arg or Lys, and Yaa may be Pro. Amino acid amides and methyl esters are also readily hydrolyzed, but rates on arylamides are exceedingly low.. It catalyses the reaction Release of an N-terminal amino acid, preferentially leucine, but not glutamic or aspartic acids.. Presumably involved in the processing and regular turnover of intracellular proteins. Catalyzes the removal of unsubstituted N-terminal amino acids from various peptides. The chain is Probable cytosol aminopeptidase 2 (pepA2) from Shewanella oneidensis (strain ATCC 700550 / JCM 31522 / CIP 106686 / LMG 19005 / NCIMB 14063 / MR-1).